A 376-amino-acid polypeptide reads, in one-letter code: UDP-N-acetylglucosamine--N-acetylmuramyl-(pentapeptide) pyrophosphoryl-undecaprenol N-acetylglucosamine transferase (376 aa).

Residues Thr11–Gly13, Asn117, Arg160, Ser208, and Gln310 contribute to the UDP-N-acetyl-alpha-D-glucosamine site.

Belongs to the glycosyltransferase 28 family. MurG subfamily.

The protein resides in the cell inner membrane. The catalysed reaction is di-trans,octa-cis-undecaprenyl diphospho-N-acetyl-alpha-D-muramoyl-L-alanyl-D-glutamyl-meso-2,6-diaminopimeloyl-D-alanyl-D-alanine + UDP-N-acetyl-alpha-D-glucosamine = di-trans,octa-cis-undecaprenyl diphospho-[N-acetyl-alpha-D-glucosaminyl-(1-&gt;4)]-N-acetyl-alpha-D-muramoyl-L-alanyl-D-glutamyl-meso-2,6-diaminopimeloyl-D-alanyl-D-alanine + UDP + H(+). Its pathway is cell wall biogenesis; peptidoglycan biosynthesis. In terms of biological role, cell wall formation. Catalyzes the transfer of a GlcNAc subunit on undecaprenyl-pyrophosphoryl-MurNAc-pentapeptide (lipid intermediate I) to form undecaprenyl-pyrophosphoryl-MurNAc-(pentapeptide)GlcNAc (lipid intermediate II). This Rickettsia africae (strain ESF-5) protein is UDP-N-acetylglucosamine--N-acetylmuramyl-(pentapeptide) pyrophosphoryl-undecaprenol N-acetylglucosamine transferase.